A 266-amino-acid chain; its full sequence is Glucosamine-6-phosphate deaminase (266 aa).

Asp-72 functions as the Proton acceptor; for enolization step in the catalytic mechanism. The For ring-opening step role is filled by Asp-141. The Proton acceptor; for ring-opening step role is filled by His-143. Glu-148 (for ring-opening step) is an active-site residue.

The protein belongs to the glucosamine/galactosamine-6-phosphate isomerase family. NagB subfamily. As to quaternary structure, homohexamer.

It carries out the reaction alpha-D-glucosamine 6-phosphate + H2O = beta-D-fructose 6-phosphate + NH4(+). It participates in amino-sugar metabolism; N-acetylneuraminate degradation; D-fructose 6-phosphate from N-acetylneuraminate: step 5/5. Its activity is regulated as follows. Allosterically activated by N-acetylglucosamine 6-phosphate (GlcNAc6P). Its function is as follows. Catalyzes the reversible isomerization-deamination of glucosamine 6-phosphate (GlcN6P) to form fructose 6-phosphate (Fru6P) and ammonium ion. The chain is Glucosamine-6-phosphate deaminase from Aeromonas salmonicida (strain A449).